The following is an 88-amino-acid chain: Small ribosomal subunit protein bS20 (88 aa).

The tract at residues 1–25 is disordered; it reads MANTPSAKKAARKIERRTAVNRARR.

This sequence belongs to the bacterial ribosomal protein bS20 family.

Functionally, binds directly to 16S ribosomal RNA. The polypeptide is Small ribosomal subunit protein bS20 (Azorhizobium caulinodans (strain ATCC 43989 / DSM 5975 / JCM 20966 / LMG 6465 / NBRC 14845 / NCIMB 13405 / ORS 571)).